A 103-amino-acid chain; its full sequence is Large ribosomal subunit protein bL21 (103 aa).

The protein belongs to the bacterial ribosomal protein bL21 family. In terms of assembly, part of the 50S ribosomal subunit. Contacts protein L20.

Functionally, this protein binds to 23S rRNA in the presence of protein L20. The polypeptide is Large ribosomal subunit protein bL21 (Chloroflexus aggregans (strain MD-66 / DSM 9485)).